Reading from the N-terminus, the 973-residue chain is DENN domain-containing protein C297.05 (973 aa).

Over residues 69 to 79 (AHHNTTGSNSV) the composition is skewed to polar residues. The interval 69–136 (AHHNTTGSNS…YHSRKPYSEP (68 aa)) is disordered. Phosphoserine is present on residues S134 and S318. The uDENN domain maps to 169-427 (ALPLFAATHP…NICCDVPLPP (259 aa)). The cDENN domain occupies 449-586 (VNEIPGWNDV…LRSKLQAHLK (138 aa)). Residues 588-919 (AAPLHDKFYV…DRCELDLNDP (332 aa)) enclose the dDENN domain. Residues 693–713 (RNFSSPPFTRPASPSSSKFRF) form a disordered region. The residue at position 726 (S726) is a Phosphoserine. The segment at 729 to 750 (SPYSVPELRSSESNQNKAGSIN) is disordered. Polar residues predominate over residues 739–750 (SESNQNKAGSIN).

The protein localises to the cytoplasm. It is found in the nucleus. The polypeptide is DENN domain-containing protein C297.05 (Schizosaccharomyces pombe (strain 972 / ATCC 24843) (Fission yeast)).